We begin with the raw amino-acid sequence, 176 residues long: Peptide deformylase (176 aa).

Fe cation contacts are provided by Cys-95 and His-137. Glu-138 is an active-site residue. His-141 is a Fe cation binding site.

It belongs to the polypeptide deformylase family. Fe(2+) is required as a cofactor.

It catalyses the reaction N-terminal N-formyl-L-methionyl-[peptide] + H2O = N-terminal L-methionyl-[peptide] + formate. Removes the formyl group from the N-terminal Met of newly synthesized proteins. Requires at least a dipeptide for an efficient rate of reaction. N-terminal L-methionine is a prerequisite for activity but the enzyme has broad specificity at other positions. In Hyphomonas neptunium (strain ATCC 15444), this protein is Peptide deformylase.